A 366-amino-acid chain; its full sequence is tRNA 2-selenouridine synthase (366 aa).

The Rhodanese domain occupies 14–137 (LLENRPLIDV…IRSFLINTIE (124 aa)). Cysteine 97 functions as the S-selanylcysteine intermediate in the catalytic mechanism.

The protein belongs to the SelU family. In terms of assembly, monomer.

It catalyses the reaction 5-methylaminomethyl-2-thiouridine(34) in tRNA + selenophosphate + (2E)-geranyl diphosphate + H2O + H(+) = 5-methylaminomethyl-2-selenouridine(34) in tRNA + (2E)-thiogeraniol + phosphate + diphosphate. It carries out the reaction 5-methylaminomethyl-2-thiouridine(34) in tRNA + (2E)-geranyl diphosphate = 5-methylaminomethyl-S-(2E)-geranyl-thiouridine(34) in tRNA + diphosphate. The catalysed reaction is 5-methylaminomethyl-S-(2E)-geranyl-thiouridine(34) in tRNA + selenophosphate + H(+) = 5-methylaminomethyl-2-(Se-phospho)selenouridine(34) in tRNA + (2E)-thiogeraniol. The enzyme catalyses 5-methylaminomethyl-2-(Se-phospho)selenouridine(34) in tRNA + H2O = 5-methylaminomethyl-2-selenouridine(34) in tRNA + phosphate. Functionally, involved in the post-transcriptional modification of the uridine at the wobble position (U34) of tRNA(Lys), tRNA(Glu) and tRNA(Gln). Catalyzes the conversion of 2-thiouridine (S2U-RNA) to 2-selenouridine (Se2U-RNA). Acts in a two-step process involving geranylation of 2-thiouridine (S2U) to S-geranyl-2-thiouridine (geS2U) and subsequent selenation of the latter derivative to 2-selenouridine (Se2U) in the tRNA chain. This is tRNA 2-selenouridine synthase from Shewanella frigidimarina (strain NCIMB 400).